Reading from the N-terminus, the 245-residue chain is tRNA1(Val) (adenine(37)-N6)-methyltransferase (245 aa).

It belongs to the methyltransferase superfamily. tRNA (adenine-N(6)-)-methyltransferase family.

The protein localises to the cytoplasm. The catalysed reaction is adenosine(37) in tRNA1(Val) + S-adenosyl-L-methionine = N(6)-methyladenosine(37) in tRNA1(Val) + S-adenosyl-L-homocysteine + H(+). Functionally, specifically methylates the adenine in position 37 of tRNA(1)(Val) (anticodon cmo5UAC). This Enterobacter sp. (strain 638) protein is tRNA1(Val) (adenine(37)-N6)-methyltransferase.